A 161-amino-acid chain; its full sequence is Peptidyl-prolyl cis-trans isomerase-like 1 (161 aa).

The 155-residue stretch at 1-155 (MATDVVFDTS…DEVKIIRAKV (155 aa)) folds into the PPIase cyclophilin-type domain.

The protein belongs to the cyclophilin-type PPIase family. PPIL1 subfamily.

It carries out the reaction [protein]-peptidylproline (omega=180) = [protein]-peptidylproline (omega=0). Functionally, PPIases accelerate the folding of proteins. It catalyzes the cis-trans isomerization of proline imidic peptide bonds in oligopeptides. The chain is Peptidyl-prolyl cis-trans isomerase-like 1 (cyp1) from Aspergillus fumigatus (strain ATCC MYA-4609 / CBS 101355 / FGSC A1100 / Af293) (Neosartorya fumigata).